Here is a 173-residue protein sequence, read N- to C-terminus: U4/U6.U5 small nuclear ribonucleoprotein component snu23 (173 aa).

A Matrin-type zinc finger spans residues 55 to 85 (WYCEACNETYKDSLSWLDHLNSTQHLRKTRT). A coiled-coil region spans residues 119 to 149 (SLKERVERYHQELEAKKLRRKQKKVNKEKNS).

As to quaternary structure, component of the 25S U4/U6.U5 tri-snRNP particle, a subcomplex of the spliceosome.

It is found in the cytoplasm. It localises to the cytoskeleton. The protein localises to the microtubule organizing center. The protein resides in the spindle pole body. Its subcellular location is the nucleus. The polypeptide is U4/U6.U5 small nuclear ribonucleoprotein component snu23 (snu23) (Schizosaccharomyces pombe (strain 972 / ATCC 24843) (Fission yeast)).